A 655-amino-acid chain; its full sequence is NACHT, LRR and PYD domains-containing protein 10 (655 aa).

A Pyrin domain is found at 1 to 96 (MAMAKARKPR…VDQLSHICLH (96 aa)). The region spanning 167–484 (SLVVLQGSAG…AMSYLVKEDQ (318 aa)) is the NACHT domain. Residue 173-180 (GSAGTGKT) coordinates ATP. Over residues 597–609 (QSQNLFSVKSSLS) the composition is skewed to polar residues. The interval 597–655 (QSQNLFSVKSSLSHGPKEEQKCPSVHGQKEGKDNIAGTQKEASTGKGRGTEETPKNTYI) is disordered. 2 stretches are compositionally biased toward basic and acidic residues: residues 611–629 (GPKEEQKCPSVHGQKEGKD) and 644–655 (RGTEETPKNTYI).

Belongs to the NLRP family. Oligomerizes. Interacts with PYCARD. Also interacts with CASP1 and IL1B. Interacts with NOD1 and components of the NOD1 signaling pathway including RIPK2, NR2C2/TAK1 and IKBKG/NEMO. In terms of tissue distribution, highly expressed in basal and suprabasal epidermal cell layers with lower levels in dermal fibroblast cells (at protein level). Widely expressed with highest levels in heart, brain and skeletal muscle. Also expressed in liver, colon, dermis and epidermis. Little expression detected in myeloid cells or peripheral blood mononuclear cells.

The protein resides in the cytoplasm. It localises to the cell membrane. In terms of biological role, inhibits autoprocessing of CASP1, CASP1-dependent IL1B secretion, PYCARD aggregation and PYCARD-mediated apoptosis but not apoptosis induced by FAS or BID. Displays anti-inflammatory activity. Required for immunity against C.albicans infection. Involved in the innate immune response by contributing to pro-inflammatory cytokine release in response to invasive bacterial infection. Contributes to T-cell-mediated inflammatory responses in the skin. Plays a role in protection against periodontitis through its involvement in induction of IL1A via ERK activation in oral epithelial cells infected with periodontal pathogens. Exhibits both ATPase and GTPase activities. This Homo sapiens (Human) protein is NACHT, LRR and PYD domains-containing protein 10 (NLRP10).